A 296-amino-acid chain; its full sequence is Phosphatidylcholine:diacylglycerol cholinephosphotransferase 2 (296 aa).

5 helical membrane-spanning segments follow: residues 83 to 103 (HWIP…EYTF), 136 to 156 (VLAA…GCTW), 165 to 182 (TIAA…GYST), 198 to 218 (PVGN…SMIA), and 250 to 270 (GHYT…DSLA). Residues His211, His251, and Asp255 contribute to the active site.

Belongs to the phosphatidylcholine:diacylglycerol cholinephosphotransferase family.

Its subcellular location is the membrane. Functionally, functions as a phosphatidylcholine:diacylglycerol cholinephosphotransferase that catalyzes the transfer of the phosphocholine headgroup from phosphatidylcholine (PC) to diacylglycerol, a major reaction for the transfer of 18:1 into phosphatidylcholine for desaturation and also for the reverse transfer of 18:2 and 18:3 into the triacylglycerols synthesis pathway. In Arabidopsis thaliana (Mouse-ear cress), this protein is Phosphatidylcholine:diacylglycerol cholinephosphotransferase 2.